A 406-amino-acid polypeptide reads, in one-letter code: MFKSFFPKPGTFFLSAFVWALIAVIFWQAGGGDWVARITGASGQIPISAARFWSLDFLIFYAYYIVCVGLFALFWFIYSPHRWQYWSILGTALIIFVTWFLVEVGVAVNAWYAPFYDLIQTALSSPHKVTIEQFYREVGVFLGIALIAVVISVLNNFFVSHYVFRWRTAMNEYYMANWQQLRHIEGAAQRVQEDTMRFASTLENMGVSFINAIMTLIAFLPVLVTLSAHVPELPIIGHIPYGLVIAAIVWSLMGTGLLAVVGIKLPGLEFKNQRVEAAYRKELVYGEDDATRATPPTVRELFSAVRKNYFRLYFHYMYFNIARILYLQVDNVFGLFLLFPSIVAGTITLGLMTQITNVFGQVRGAFQYLINSWTTLVELMSIYKRLRSFEHELDGDKIQEVTHTLS.

Residues 1–11 (MFKSFFPKPGT) are Periplasmic-facing. The chain crosses the membrane as a helical span at residues 12 to 32 (FFLSAFVWALIAVIFWQAGGG). Topologically, residues 33-56 (DWVARITGASGQIPISAARFWSLD) are cytoplasmic. Residues 57–77 (FLIFYAYYIVCVGLFALFWFI) traverse the membrane as a helical segment. Residues 78–87 (YSPHRWQYWS) are Periplasmic-facing. The chain crosses the membrane as a helical span at residues 88 to 108 (ILGTALIIFVTWFLVEVGVAV). Residues 109-137 (NAWYAPFYDLIQTALSSPHKVTIEQFYRE) are Cytoplasmic-facing. A helical membrane pass occupies residues 138-158 (VGVFLGIALIAVVISVLNNFF). The Periplasmic portion of the chain corresponds to 159–205 (VSHYVFRWRTAMNEYYMANWQQLRHIEGAAQRVQEDTMRFASTLENM). The helical transmembrane segment at 206 to 226 (GVSFINAIMTLIAFLPVLVTL) threads the bilayer. At 227-242 (SAHVPELPIIGHIPYG) the chain is on the cytoplasmic side. A helical transmembrane segment spans residues 243–263 (LVIAAIVWSLMGTGLLAVVGI). Topologically, residues 264 to 331 (KLPGLEFKNQ…ARILYLQVDN (68 aa)) are periplasmic. The chain crosses the membrane as a helical span at residues 332 to 352 (VFGLFLLFPSIVAGTITLGLM). At 353 to 406 (TQITNVFGQVRGAFQYLINSWTTLVELMSIYKRLRSFEHELDGDKIQEVTHTLS) the chain is on the cytoplasmic side.

Belongs to the peptide uptake permease (PUP) (TC 9.A.18) family.

It is found in the cell inner membrane. Functionally, uptake of antimicrobial peptides. In Escherichia coli O157:H7, this protein is Peptide antibiotic transporter SbmA (sbmA).